The chain runs to 517 residues: Synaptic vesicular amine transporter (517 aa).

Topologically, residues 1 to 20 are cytoplasmic; sequence MALSELALLRRLQESRHSRK. A helical transmembrane segment spans residues 21 to 41; the sequence is LILFIVFLALLLDNMLLTVVV. Residues 42 to 132 are Extracellular-facing; that stretch reads PIIPSYLYSI…EDKDLLNENV (91 aa). N-linked (GlcNAc...) asparagine glycans are attached at residues asparagine 84, asparagine 91, and asparagine 112. Residues cysteine 120 and cysteine 327 are joined by a disulfide bond. Residues 133-153 traverse the membrane as a helical segment; it reads QVGLLFASKATVQLLTNPFIG. At 154 to 162 the chain is on the cytoplasmic side; the sequence is LLTNRIGYP. A helical membrane pass occupies residues 163–183; that stretch reads IPMFTGFCIMFISTVMFAFSR. At 184-192 the chain is on the extracellular side; that stretch reads TYAFLLIAR. The chain crosses the membrane as a helical span at residues 193-213; it reads SLQGIGSSCSSVAGMGMLASV. Topologically, residues 214 to 222 are cytoplasmic; that stretch reads YTDDEERGN. Residues 223-245 traverse the membrane as a helical segment; the sequence is AMGIALGGLAMGVLVGPPFGSVL. Serotonin-binding residues include leucine 231 and valine 235. Residues 246-251 are Extracellular-facing; it reads YEFVGK. The chain crosses the membrane as a helical span at residues 252 to 274; that stretch reads TAPFLVLAALVLLDGAIQLFVLQ. At 275–294 the chain is on the cytoplasmic side; the sequence is PSRVQPESQKGTPLTTLLRD. A helical transmembrane segment spans residues 295-314; it reads PYILIAAGSICFANMGIAML. 5 residues coordinate serotonin: asparagine 308, isoleucine 311, glutamate 315, phenylalanine 337, and tyrosine 344. Topologically, residues 315-331 are extracellular; it reads EPALPIWMMETMCSHKW. Residues 332–355 traverse the membrane as a helical segment; it reads QLGVAFLPASVSYLIGTNVFGILA. Topologically, residues 356-360 are cytoplasmic; that stretch reads HKMGR. A helical transmembrane segment spans residues 361–381; the sequence is WLCALLGMIIVGMSILCIPLA. Residues 382–392 lie on the Extracellular side of the membrane; that stretch reads KNIYGLIAPNF. Residues 393–413 form a helical membrane-spanning segment; sequence GVGFAIGMVDSSMMPIMGYLV. A serotonin-binding site is contributed by aspartate 402. Topologically, residues 414–417 are cytoplasmic; it reads DLRH. Residues 418–438 form a helical membrane-spanning segment; that stretch reads VSVYGSVYAIADVAFCMGYAI. A serotonin-binding site is contributed by tyrosine 436. The Extracellular portion of the chain corresponds to 439–443; it reads GPSAG. Residues 444-465 form a helical membrane-spanning segment; sequence GAIAKAIGFPWLMTIIGIIDIL. The Cytoplasmic segment spans residues 466–517; it reads FAPLCFFLRSPPAKEEKMAILMDHNCPIKTKMYTQNSSQSHPIGEDEESESD. Phosphoserine; by CK2 occurs at positions 514 and 516.

This sequence belongs to the major facilitator superfamily. Vesicular transporter family. In terms of assembly, interacts with SLC6A3.

The protein localises to the cytoplasmic vesicle. It localises to the secretory vesicle. Its subcellular location is the synaptic vesicle membrane. The protein resides in the secretory vesicle membrane. It is found in the cell projection. The protein localises to the axon. It localises to the dendrite. The catalysed reaction is serotonin(in) + 2 H(+)(out) = serotonin(out) + 2 H(+)(in). It carries out the reaction dopamine(in) + 2 H(+)(out) = dopamine(out) + 2 H(+)(in). The enzyme catalyses histamine(in) + 2 H(+)(out) = histamine(out) + 2 H(+)(in). Its activity is regulated as follows. Strongly inhibited by reserpine and tetrabenazine. Also inhibited to a lesser extent by ketanserin and fenfluramine. Reserpine and ketanserin inhibit by blocking the substrate-binding pocket. Tetrabenazine traps SLC18A2/VMAT2 in an occluded conformation and its inhibition is specific to SLC18A2/VMAT2 but not SLC18A1/VMAT1. Functionally, electrogenic antiporter that exchanges one cationic monoamine with two intravesicular protons across the membrane of secretory and synaptic vesicles. Uses the electrochemical proton gradient established by the V-type proton-pump ATPase to accumulate high concentrations of monoamines inside the vesicles prior to their release via exocytosis. Transports a variety of catecholamines such as dopamine, adrenaline and noradrenaline, histamine, and indolamines such as serotonin. Regulates the transvesicular monoaminergic gradient that determines the quantal size. Mediates somatodendritic dopamine release in hippocampal neurons, likely as part of a regulated secretory pathway that integrates retrograde synaptic signals. Acts as a primary transporter for striatal dopamine loading ensuring impulse-dependent release of dopamine at the synaptic cleft. Responsible for histamine and serotonin storage and subsequent corelease from mast cell granules. The protein is Synaptic vesicular amine transporter (SLC18A2) of Bos taurus (Bovine).